We begin with the raw amino-acid sequence, 138 residues long: Acidic phospholipase A2 Tbo-E6 (138 aa).

The first 16 residues, 1–16 (MRTLWILAVLLLGVKG), serve as a signal peptide directing secretion. Disulfide bonds link C42-C131, C44-C60, C59-C111, C65-C138, C66-C104, C73-C97, and C91-C102. 3 residues coordinate Ca(2+): Y43, G45, and G47. Residue H63 is part of the active site. D64 contacts Ca(2+). Residue D105 is part of the active site.

Monomer. Ca(2+) serves as cofactor. As to expression, expressed by the venom gland.

Its subcellular location is the secreted. It catalyses the reaction a 1,2-diacyl-sn-glycero-3-phosphocholine + H2O = a 1-acyl-sn-glycero-3-phosphocholine + a fatty acid + H(+). In terms of biological role, snake venom phospholipase A2 (PLA2) that impairs hemostasis. It weakly inhibits ADP-induced platelet aggregation when tested on platelet rich plasma from human and rabbit blood (15-25% of inhibition at 5-10 ug of enzyme), and dose-dependently inhibits blood coagulation, possibly by inhibiting thrombin activation. Exhibits high hydrolytic activities toward L-dipalmitoyl phosphatidylcholine. PLA2 catalyzes the calcium-dependent hydrolysis of the 2-acyl groups in 3-sn-phosphoglycerides. This chain is Acidic phospholipase A2 Tbo-E6, found in Craspedocephalus borneensis (Borneo pit viper).